The sequence spans 119 residues: MGNMGTSELLKHIYDINLSYLLLAQRLINDEKASAMFRLGINDEMANILMQLTLPQMVKLAETNQLICHFRFNDHNTIKVLTQESRVDDLQQIHTGILLSSSLLQQLASKEENLPKKRA.

Belongs to the FlhD family. As to quaternary structure, homodimer; disulfide-linked. Forms a heterohexamer composed of two FlhC and four FlhD subunits. Each FlhC binds a FlhD dimer, forming a heterotrimer, and a hexamer assembles by dimerization of two heterotrimers.

It is found in the cytoplasm. Functions in complex with FlhC as a master transcriptional regulator that regulates transcription of several flagellar and non-flagellar operons by binding to their promoter region. Activates expression of class 2 flagellar genes, including fliA, which is a flagellum-specific sigma factor that turns on the class 3 genes. Also regulates genes whose products function in a variety of physiological pathways. The sequence is that of Flagellar transcriptional regulator FlhD from Pectobacterium atrosepticum (strain SCRI 1043 / ATCC BAA-672) (Erwinia carotovora subsp. atroseptica).